Here is a 330-residue protein sequence, read N- to C-terminus: 2-oxoisovalerate dehydrogenase subunit alpha (330 aa).

Residues phenylalanine 44, tyrosine 73, 107 to 110, and serine 123 contribute to the substrate site; that span reads MPGH. 72 to 74 contributes to the thiamine diphosphate binding site; the sequence is YYR. Thiamine diphosphate contacts are provided by residues 123–125, 153–159, 183–187, and histidine 252; these read SPV, GEGSSNQ, and NKYAI. The Mg(2+) site is built by glutamate 154, asparagine 183, and tyrosine 185. Residues 249-272 form a disordered region; it reads LTPHSSDDDDSSYRGREEVEEAKK. The span at 259–272 shows a compositional bias: basic and acidic residues; the sequence is SSYRGREEVEEAKK.

It belongs to the BCKDHA family. Heterotetramer of two alpha and two beta chains. Directly associated with ODBB in the E1 complex. It depends on thiamine diphosphate as a cofactor.

It catalyses the reaction N(6)-[(R)-lipoyl]-L-lysyl-[protein] + 3-methyl-2-oxobutanoate + H(+) = N(6)-[(R)-S(8)-2-methylpropanoyldihydrolipoyl]-L-lysyl-[protein] + CO2. Its function is as follows. The branched-chain alpha-keto dehydrogenase complex catalyzes the overall conversion of alpha-keto acids to acyl-CoA and CO(2). It contains multiple copies of three enzymatic components: branched-chain alpha-keto acid decarboxylase (E1), lipoamide acyltransferase (E2) and lipoamide dehydrogenase (E3). The chain is 2-oxoisovalerate dehydrogenase subunit alpha (bfmBAA) from Bacillus subtilis (strain 168).